Consider the following 220-residue polypeptide: 1-Cys peroxiredoxin B (220 aa).

In terms of domain architecture, Thioredoxin spans 4–165 (LTLGDVVPDL…VLRATDALLT (162 aa)). C46 serves as the catalytic Cysteine sulfenic acid (-SOH) intermediate. Positions 195 to 218 (KARFPAGFETAQLPSNKCYLRFTQ) match the Bipartite nuclear localization signal motif.

It belongs to the peroxiredoxin family. Prx6 subfamily.

It is found in the nucleus. Its subcellular location is the cytoplasm. It carries out the reaction a hydroperoxide + [thioredoxin]-dithiol = an alcohol + [thioredoxin]-disulfide + H2O. Its function is as follows. Thiol-specific peroxidase that catalyzes the reduction of hydrogen peroxide and organic hydroperoxides to water and alcohols, respectively. Seems to contribute to the inhibition of germination during stress. This Oryza sativa subsp. japonica (Rice) protein is 1-Cys peroxiredoxin B.